The primary structure comprises 423 residues: Salicylate 5-hydroxylase, large oxygenase component (423 aa).

The interval 1–20 (MSEPQRLKPVFPQDPKWPGE) is disordered. One can recognise a Rieske domain in the interval 49–168 (WCYVGLEAEI…VAARGGAVFA (120 aa)). [2Fe-2S] cluster is bound by residues Cys-91, His-93, Cys-111, and His-114. His-224, His-229, and Asp-370 together coordinate Fe cation.

It belongs to the bacterial ring-hydroxylating dioxygenase alpha subunit family. As to quaternary structure, the salicylate 5-hydroxylase (S5H) multicomponent enzyme system is composed of an electron transfer component and an oxygenase component. The electron transfer component is comprised of a ferredoxin reductase (NagAa) and a ferredoxin (NagAb), and the oxygenase component is formed by a large subunit (NagG) and a small subunit (NagH). It depends on Fe cation as a cofactor. [2Fe-2S] cluster serves as cofactor.

The enzyme catalyses salicylate + NADH + O2 + H(+) = 2,5-dihydroxybenzoate + NAD(+) + H2O. It functions in the pathway aromatic compound metabolism; naphthalene degradation. In terms of biological role, oxygenase component of the salicylate 5-hydroxylase (S5H) multicomponent enzyme system which catalyzes the 5-hydroxylation of salicylate to gentisate. Active only on substrates with a ring-substituted carboxylate group with an adjacent hydroxyl group. Primarily active against salicylate and substituted salicylates, but not against 2-hydroxycinnamate, 3-hydroxycinnamate, 2-hydroxyphenylacetate, 3-hydroxyphenylacetate, 2-hydroxybenzophenone, 1-hydroxy-2-naphthoate, 4-methoxysalicylate or 2-hydroxyacetophenone. This Ralstonia sp protein is Salicylate 5-hydroxylase, large oxygenase component.